Reading from the N-terminus, the 732-residue chain is MAP7 domain-containing protein 2 (732 aa).

Methionine 1 is modified (N-acetylmethionine). The span at 1–10 (MERGGGGSGT) shows a compositional bias: gly residues. Disordered stretches follow at residues 1 to 64 (MERG…RREE), 95 to 123 (WRKL…LREE), 157 to 186 (PGGH…KRLS), 210 to 244 (GPLN…GKEA), and 279 to 509 (EFSG…KQKE). Positions 49–64 (LKSDERQRLAKERREE) are enriched in basic and acidic residues. Positions 51 to 146 (SDERQRLAKE…RTQQLELKKK (96 aa)) form a coiled coil. A compositionally biased stretch (basic and acidic residues) spans 329–345 (MPKRKAEKEKSNKEREG). The segment covering 347 to 357 (LAQQAAGPQGE) has biased composition (low complexity). Positions 359–374 (ALEKHVVDKHASEKHA) are enriched in basic and acidic residues. Low complexity predominate over residues 375-386 (AAAGGKAENSAA). The span at 404–509 (LAEKRRQARL…EKAMIEKQKE (106 aa)) shows a compositional bias: basic and acidic residues.

It belongs to the MAP7 family. As to quaternary structure, interacts (via N-terminus) with microtubules; facilitates microtubule stabilization. Interacts with kinesin-1 family members, KIF5A, KIF5B and KIF5C.

The protein resides in the cytoplasm. It localises to the cytoskeleton. It is found in the microtubule organizing center. Its subcellular location is the centrosome. The protein localises to the midbody. The protein resides in the cell projection. It localises to the neuron projection. It is found in the axon. Microtubule-stabilizing protein that plays a role in the control of cell motility and neurite outgrowth via direct binding to the microtubule. Acts as a critical cofactor for kinesin transport. In the proximal axon, regulates kinesin-1 family members, KIF5A, KIF5B and KIF5C recruitment to microtubules and contributes to kinesin-1-mediated transport in the axons. This chain is MAP7 domain-containing protein 2 (MAP7D2), found in Homo sapiens (Human).